We begin with the raw amino-acid sequence, 166 residues long: NAD(P)H-quinone oxidoreductase subunit I, chloroplastic (166 aa).

2 4Fe-4S ferredoxin-type domains span residues 55–84 and 95–124; these read GRIHFEFDKCIACEVCVRVCPIDLPVVDWK and LNYSIDFGICIFCGNCVEYCPTNCLSMTEE. The [4Fe-4S] cluster site is built by Cys-64, Cys-67, Cys-70, Cys-74, Cys-104, Cys-107, Cys-110, and Cys-114.

Belongs to the complex I 23 kDa subunit family. In terms of assembly, NDH is composed of at least 16 different subunits, 5 of which are encoded in the nucleus. The cofactor is [4Fe-4S] cluster.

The protein resides in the plastid. It localises to the chloroplast thylakoid membrane. It carries out the reaction a plastoquinone + NADH + (n+1) H(+)(in) = a plastoquinol + NAD(+) + n H(+)(out). The catalysed reaction is a plastoquinone + NADPH + (n+1) H(+)(in) = a plastoquinol + NADP(+) + n H(+)(out). NDH shuttles electrons from NAD(P)H:plastoquinone, via FMN and iron-sulfur (Fe-S) centers, to quinones in the photosynthetic chain and possibly in a chloroplast respiratory chain. The immediate electron acceptor for the enzyme in this species is believed to be plastoquinone. Couples the redox reaction to proton translocation, and thus conserves the redox energy in a proton gradient. The sequence is that of NAD(P)H-quinone oxidoreductase subunit I, chloroplastic from Laphamia lindheimeri (Lindheimer's rockdaisy).